A 259-amino-acid chain; its full sequence is Adenosylcobinamide-GDP ribazoletransferase (259 aa).

7 helical membrane passes run 36–56, 65–85, 108–128, 133–153, 175–195, 201–221, and 238–258; these read FSPLIGVLIGVLQVSVLILLL, MPFIAIALGLWITGGIHVDGL, IGASGIIALTINLLLQIAALF, LILFAIPIASFWGRYSQIWAI, GFLIESIPSYAFLSFLIFILI, IISTPNLIIGIIVGFLPALII, and GASVVLVETCMLIIFSIILPA.

The protein belongs to the CobS family. Mg(2+) is required as a cofactor.

Its subcellular location is the cell inner membrane. It carries out the reaction alpha-ribazole + adenosylcob(III)inamide-GDP = adenosylcob(III)alamin + GMP + H(+). The enzyme catalyses alpha-ribazole 5'-phosphate + adenosylcob(III)inamide-GDP = adenosylcob(III)alamin 5'-phosphate + GMP + H(+). It functions in the pathway cofactor biosynthesis; adenosylcobalamin biosynthesis; adenosylcobalamin from cob(II)yrinate a,c-diamide: step 7/7. Functionally, joins adenosylcobinamide-GDP and alpha-ribazole to generate adenosylcobalamin (Ado-cobalamin). Also synthesizes adenosylcobalamin 5'-phosphate from adenosylcobinamide-GDP and alpha-ribazole 5'-phosphate. The chain is Adenosylcobinamide-GDP ribazoletransferase from Prochlorococcus marinus (strain SARG / CCMP1375 / SS120).